A 729-amino-acid chain; its full sequence is Neurochondrin (729 aa).

The residue at position 2 (Ser-2) is an N-acetylserine. The residue at position 2 (Ser-2) is a Phosphoserine. S-palmitoyl cysteine attachment occurs at residues Cys-3 and Cys-4. Arg-75 bears the Asymmetric dimethylarginine mark. Ser-448 carries the post-translational modification Phosphoserine.

Belongs to the neurochondrin family. In terms of assembly, interacts with MCHR1. Interacts with SEMA4C. Interacts with DIAPH1 (via FH3 domain). Interacts with GRM5. Palmitoylated. Palmitoylation by ZDHHC1, ZDHHC3 and ZDHHC11 regulates the association of NCDN with endosome membranes. May also be palmitoylated by ZDHHC7.

Its subcellular location is the cytoplasm. The protein resides in the cytosol. It is found in the endosome membrane. It localises to the cell projection. The protein localises to the dendrite. Its subcellular location is the postsynapse. In terms of biological role, probably involved in signal transduction, in the nervous system, via increasing cell surface localization of GRM5 and positively regulating its signaling. Required for the spatial learning process. Acts as a negative regulator of Ca(2+)-calmodulin-dependent protein kinase 2 (CaMK2) phosphorylation. May play a role in modulating melanin-concentrating hormone-mediated functions via its interaction with MCHR1 that interferes with G protein-coupled signal transduction. May be involved in bone metabolism. May also be involved in neurite outgrowth. This chain is Neurochondrin (NCDN), found in Bos taurus (Bovine).